The primary structure comprises 206 residues: Dephospho-CoA kinase (206 aa).

Residues 4-200 form the DPCK domain; sequence TVALTGGIGS…ASYLKLASQF (197 aa). Residue 12 to 17 participates in ATP binding; the sequence is GSGKST.

Belongs to the CoaE family.

The protein localises to the cytoplasm. The enzyme catalyses 3'-dephospho-CoA + ATP = ADP + CoA + H(+). It functions in the pathway cofactor biosynthesis; coenzyme A biosynthesis; CoA from (R)-pantothenate: step 5/5. Catalyzes the phosphorylation of the 3'-hydroxyl group of dephosphocoenzyme A to form coenzyme A. The sequence is that of Dephospho-CoA kinase from Salmonella paratyphi A (strain ATCC 9150 / SARB42).